Consider the following 671-residue polypeptide: Probable serine/threonine-protein kinase DDB_G0286627 (671 aa).

The Protein kinase domain maps to 31–283 (WVIERQLSKG…SHQLIKHPFF (253 aa)). ATP is bound by residues 37-45 (LSKGSFGQV) and Lys-61. The active-site Proton acceptor is Asp-148. Residues 369-389 (FKIIYLFLILLFLMTILVNLN) form a helical membrane-spanning segment. Residues 410-523 (PESNPIKKPS…PPVTETPKPT (114 aa)) are disordered. The segment covering 427 to 490 (NQYSEGSQSS…PTDSSTTDPP (64 aa)) has biased composition (low complexity). A compositionally biased stretch (pro residues) spans 491–513 (VTDPPITDPPITDPPVTDPPITE).

This sequence belongs to the protein kinase superfamily. STE Ser/Thr protein kinase family. Mg(2+) is required as a cofactor.

Its subcellular location is the membrane. It catalyses the reaction L-seryl-[protein] + ATP = O-phospho-L-seryl-[protein] + ADP + H(+). The enzyme catalyses L-threonyl-[protein] + ATP = O-phospho-L-threonyl-[protein] + ADP + H(+). The sequence is that of Probable serine/threonine-protein kinase DDB_G0286627 from Dictyostelium discoideum (Social amoeba).